The following is a 134-amino-acid chain: Small ribosomal subunit protein uS11 (134 aa).

It belongs to the universal ribosomal protein uS11 family. In terms of assembly, part of the 30S ribosomal subunit. Interacts with proteins S7 and S18. Binds to IF-3.

In terms of biological role, located on the platform of the 30S subunit, it bridges several disparate RNA helices of the 16S rRNA. Forms part of the Shine-Dalgarno cleft in the 70S ribosome. The protein is Small ribosomal subunit protein uS11 of Parafrankia sp. (strain EAN1pec).